Here is a 284-residue protein sequence, read N- to C-terminus: RNase adapter protein RapZ (284 aa).

ATP is bound at residue 8 to 15; that stretch reads GRSGSGKS. Residue 56-59 coordinates GTP; that stretch reads DVRN. The interval 266 to 284 is RNA-binding; the sequence is RSRGKNVQSRHRTLEKRKP.

It belongs to the RapZ-like family. RapZ subfamily. In terms of assembly, homotrimer.

Modulates the synthesis of GlmS, by affecting the processing and stability of the regulatory small RNA GlmZ. When glucosamine-6-phosphate (GlcN6P) concentrations are high in the cell, RapZ binds GlmZ and targets it to cleavage by RNase E. Consequently, GlmZ is inactivated and unable to activate GlmS synthesis. Under low GlcN6P concentrations, RapZ is sequestered and inactivated by an other regulatory small RNA, GlmY, preventing GlmZ degradation and leading to synthesis of GlmS. This Escherichia coli O1:K1 / APEC protein is RNase adapter protein RapZ.